A 150-amino-acid chain; its full sequence is uncharacterized protein (150 aa).

The N-terminal stretch at 1-21 is a signal peptide; the sequence is MAMEMAMMGLLGTVVGASAMG.

This is an uncharacterized protein from Mycobacterium tuberculosis (strain CDC 1551 / Oshkosh).